The chain runs to 1408 residues: DNA-directed RNA polymerase subunit beta' (1408 aa).

Zn(2+) contacts are provided by Cys70, Cys72, Cys85, and Cys88. The Mg(2+) site is built by Asp460, Asp462, and Asp464. Residues Cys814, Cys888, Cys895, and Cys898 each contribute to the Zn(2+) site.

It belongs to the RNA polymerase beta' chain family. The RNAP catalytic core consists of 2 alpha, 1 beta, 1 beta' and 1 omega subunit. When a sigma factor is associated with the core the holoenzyme is formed, which can initiate transcription. Mg(2+) is required as a cofactor. Zn(2+) serves as cofactor.

It catalyses the reaction RNA(n) + a ribonucleoside 5'-triphosphate = RNA(n+1) + diphosphate. DNA-dependent RNA polymerase catalyzes the transcription of DNA into RNA using the four ribonucleoside triphosphates as substrates. In Shewanella frigidimarina (strain NCIMB 400), this protein is DNA-directed RNA polymerase subunit beta'.